The following is a 122-amino-acid chain: MSLEEKVKNDKKQQVHTILKLMSTTINYISHPSITKSLECNLNCKSLFQLFKNLNINSFLNIKFEQKNDILIFKDTEALKVLYVLIVIINESDHPLYPCYLEWIKENAWMEESMKLFTLIKY.

The protein belongs to the IIV-6 115R family.

This is an uncharacterized protein from Acheta domesticus (House cricket).